An 88-amino-acid polypeptide reads, in one-letter code: Small ribosomal subunit protein uS15 (88 aa).

The protein belongs to the universal ribosomal protein uS15 family. In terms of assembly, part of the 30S ribosomal subunit. Forms a bridge to the 50S subunit in the 70S ribosome, contacting the 23S rRNA.

Its function is as follows. One of the primary rRNA binding proteins, it binds directly to 16S rRNA where it helps nucleate assembly of the platform of the 30S subunit by binding and bridging several RNA helices of the 16S rRNA. In terms of biological role, forms an intersubunit bridge (bridge B4) with the 23S rRNA of the 50S subunit in the ribosome. The polypeptide is Small ribosomal subunit protein uS15 (Borrelia hermsii (strain HS1 / DAH)).